The sequence spans 334 residues: GTP 3',8-cyclase (334 aa).

Residues 11-235 enclose the Radical SAM core domain; sequence GFNRKVDYLR…VESAESSQGP (225 aa). Residue arginine 20 participates in GTP binding. Residues cysteine 27 and cysteine 31 each coordinate [4Fe-4S] cluster. Tyrosine 33 contributes to the S-adenosyl-L-methionine binding site. Cysteine 34 serves as a coordination point for [4Fe-4S] cluster. Position 69 (arginine 69) interacts with GTP. S-adenosyl-L-methionine is bound at residue glycine 73. Residue threonine 100 participates in GTP binding. An S-adenosyl-L-methionine-binding site is contributed by serine 124. A GTP-binding site is contributed by lysine 161. Methionine 195 contacts S-adenosyl-L-methionine. [4Fe-4S] cluster-binding residues include cysteine 260 and cysteine 263. Residue 265-267 coordinates GTP; that stretch reads RVR. [4Fe-4S] cluster is bound at residue cysteine 277.

It belongs to the radical SAM superfamily. MoaA family. Monomer and homodimer. [4Fe-4S] cluster is required as a cofactor.

The enzyme catalyses GTP + AH2 + S-adenosyl-L-methionine = (8S)-3',8-cyclo-7,8-dihydroguanosine 5'-triphosphate + 5'-deoxyadenosine + L-methionine + A + H(+). The protein operates within cofactor biosynthesis; molybdopterin biosynthesis. Its function is as follows. Catalyzes the cyclization of GTP to (8S)-3',8-cyclo-7,8-dihydroguanosine 5'-triphosphate. This chain is GTP 3',8-cyclase, found in Pseudomonas entomophila (strain L48).